The sequence spans 338 residues: Nicotinate-nucleotide--dimethylbenzimidazole phosphoribosyltransferase (338 aa).

Glu-305 serves as the catalytic Proton acceptor.

It belongs to the CobT family.

The catalysed reaction is 5,6-dimethylbenzimidazole + nicotinate beta-D-ribonucleotide = alpha-ribazole 5'-phosphate + nicotinate + H(+). It participates in nucleoside biosynthesis; alpha-ribazole biosynthesis; alpha-ribazole from 5,6-dimethylbenzimidazole: step 1/2. Functionally, catalyzes the synthesis of alpha-ribazole-5'-phosphate from nicotinate mononucleotide (NAMN) and 5,6-dimethylbenzimidazole (DMB). This is Nicotinate-nucleotide--dimethylbenzimidazole phosphoribosyltransferase from Rhizobium leguminosarum bv. trifolii (strain WSM2304).